Reading from the N-terminus, the 836-residue chain is Protein O-mannosyl-transferase tmtc2 (836 aa).

The chain crosses the membrane as a helical span at residues 1-21; the sequence is MIAELLSSALGLLLYLNTLGA. The Extracellular portion of the chain corresponds to 22-77; that stretch reads DFCYDDSRAIKTNQDLLPETPWNHIFFNDFWGTLLTHSGSHKSYRPLCTLSFRLNY. The helical transmembrane segment at 78-98 threads the bilayer; it reads LFGGLDPWNYHLVNVLLHSAV. At 99–107 the chain is on the cytoplasmic side; sequence TGLFTNLCK. A helical membrane pass occupies residues 108 to 128; the sequence is ALFGSGCWTLIAGLLFASHPI. Residues 129–132 are Extracellular-facing; the sequence is HTEA. The chain crosses the membrane as a helical span at residues 133 to 153; it reads VSGIVGRADVGSGLFFLLSLL. Topologically, residues 154 to 164 are cytoplasmic; sequence CYMKHCSTRGY. The helical transmembrane segment at 165–185 threads the bilayer; the sequence is SLSSWCWILCAGFWAACSMLW. The Extracellular portion of the chain corresponds to 186-188; the sequence is KEQ. The chain crosses the membrane as a helical span at residues 189 to 209; sequence GVTVLAVSAVYDVFVFHKLKM. Residues 210 to 220 are Cytoplasmic-facing; it reads NQIISVVFKEK. The chain crosses the membrane as a helical span at residues 221-241; the sequence is NVSFFFSVGLLFAWGVILLGA. Residues 242 to 312 lie on the Extracellular side of the membrane; sequence RFYWMGNTPP…KTITDWRNIH (71 aa). A helical membrane pass occupies residues 313 to 333; the sequence is TVAFYILLILLAYSSLKGSAI. Topologically, residues 334–392 are cytoplasmic; the sequence is KRDCNGKVFMNGKQNTNGHSCQSDLEHKNAEQNPVIASKLENGVKHHNSHEMQLPSTEN. The helical transmembrane segment at 393 to 413 threads the bilayer; the sequence is IVVLALSLLIVPFVPASNLFF. Residue Y414 is a topological domain, extracellular. Residues 415 to 435 form a helical membrane-spanning segment; sequence VGFVIAERVLYIPSMGFCLLV. Topologically, residues 436 to 449 are cytoplasmic; that stretch reads TVGARALYIKAQKN. Residues 450–470 traverse the membrane as a helical segment; the sequence is ILKNLLFYATAALIVFYGLKT. At 471-836 the chain is on the extracellular side; the sequence is VVRNGDWKNE…EKQGLKNSKT (366 aa). 9 TPR repeats span residues 493–526, 527–560, 561–594, 606–639, 643–676, 677–710, 711–744, 745–778, and 779–812; these read AKAW…RSNM, ADML…RPTL, ASGY…PDEN, TSCL…MPRQ, QSLY…KPDH, IPAH…DPNK, GNCY…DSSE, FDVV…RQNY, and PAAL…KPDD.

This sequence belongs to the TMTC family.

It is found in the membrane. It localises to the endoplasmic reticulum. The catalysed reaction is a di-trans,poly-cis-dolichyl beta-D-mannosyl phosphate + L-seryl-[protein] = 3-O-(alpha-D-mannosyl)-L-seryl-[protein] + a di-trans,poly-cis-dolichyl phosphate + H(+). It carries out the reaction a di-trans,poly-cis-dolichyl beta-D-mannosyl phosphate + L-threonyl-[protein] = 3-O-(alpha-D-mannosyl)-L-threonyl-[protein] + a di-trans,poly-cis-dolichyl phosphate + H(+). It functions in the pathway protein modification; protein glycosylation. Transfers mannosyl residues to the hydroxyl group of serine or threonine residues. The sequence is that of Protein O-mannosyl-transferase tmtc2 (tmtc2) from Xenopus laevis (African clawed frog).